The sequence spans 105 residues: Heat shock protein HspQ (105 aa).

This sequence belongs to the HspQ family.

It is found in the cytoplasm. Functionally, involved in the degradation of certain denaturated proteins, including DnaA, during heat shock stress. The protein is Heat shock protein HspQ of Blochmanniella pennsylvanica (strain BPEN).